Here is a 396-residue protein sequence, read N- to C-terminus: Tryptophan synthase beta chain 1 (396 aa).

At Lys86 the chain carries N6-(pyridoxal phosphate)lysine.

The protein belongs to the TrpB family. In terms of assembly, tetramer of two alpha and two beta chains. Requires pyridoxal 5'-phosphate as cofactor.

It catalyses the reaction (1S,2R)-1-C-(indol-3-yl)glycerol 3-phosphate + L-serine = D-glyceraldehyde 3-phosphate + L-tryptophan + H2O. The protein operates within amino-acid biosynthesis; L-tryptophan biosynthesis; L-tryptophan from chorismate: step 5/5. In terms of biological role, the beta subunit is responsible for the synthesis of L-tryptophan from indole and L-serine. In Vibrio parahaemolyticus serotype O3:K6 (strain RIMD 2210633), this protein is Tryptophan synthase beta chain 1 (trpB1).